Reading from the N-terminus, the 231-residue chain is Large ribosomal subunit protein uL1 (231 aa).

The protein belongs to the universal ribosomal protein uL1 family. As to quaternary structure, part of the 50S ribosomal subunit.

Binds directly to 23S rRNA. The L1 stalk is quite mobile in the ribosome, and is involved in E site tRNA release. Its function is as follows. Protein L1 is also a translational repressor protein, it controls the translation of the L11 operon by binding to its mRNA. The polypeptide is Large ribosomal subunit protein uL1 (Acidovorax ebreus (strain TPSY) (Diaphorobacter sp. (strain TPSY))).